The following is a 353-amino-acid chain: Green-sensitive opsin-2 (353 aa).

The Extracellular portion of the chain corresponds to 1–47; the sequence is MAAHEPVFAARRHNEDTTRESAFVYTNANNTRDPFEGPNYHIAPRWV. A glycan (N-linked (GlcNAc...) asparagine) is linked at asparagine 29. Residues 48-72 traverse the membrane as a helical segment; sequence YNVSSLWMIFVVIASVFTNGLVIVA. Residues 73–84 are Cytoplasmic-facing; the sequence is TAKFKKLRHPLN. The chain crosses the membrane as a helical span at residues 85 to 110; it reads WILVNLAIADLGETVLASTISVINQI. The Extracellular portion of the chain corresponds to 111-124; sequence FGYFILGHPMCVFE. Cysteine 121 and cysteine 198 form a disulfide bridge. The chain crosses the membrane as a helical span at residues 125 to 144; sequence GWTVSVCGITALWSLTIISW. At 145–163 the chain is on the cytoplasmic side; it reads ERWVVVCKPFGNVKFDGKW. The chain crosses the membrane as a helical span at residues 164-187; the sequence is AAGGIIFSWVWAIIWCTPPIFGWS. Residues 188-213 lie on the Extracellular side of the membrane; that stretch reads RYWPHGLKTSCGPDVFSGSEDPGVAS. The chain crosses the membrane as a helical span at residues 214-241; sequence YMITLMLTCCILPLSIIIICYIFVWSAI. Over 242–263 the chain is Cytoplasmic; it reads HQVAQQQKDSESTQKAEKEVSR. The helical transmembrane segment at 264–287 threads the bilayer; it reads MVVVMILAFIVCWGPYASFATFSA. At 288–295 the chain is on the extracellular side; it reads VNPGYAWH. Residues 296-320 traverse the membrane as a helical segment; the sequence is PLAAAMPAYFAKSATIYNPIIYVFM. Lysine 307 is modified (N6-(retinylidene)lysine). Residues 321–353 are Cytoplasmic-facing; that stretch reads NRQFRSCIMQLFGKKVEDASEVSGSTTEVSTAS.

Belongs to the G-protein coupled receptor 1 family. Opsin subfamily. The color pigments are found in the cone photoreceptor cells.

It is found in the membrane. Visual pigments are the light-absorbing molecules that mediate vision. They consist of an apoprotein, opsin, covalently linked to cis-retinal. In Psalidodon fasciatus (Banded astyanax), this protein is Green-sensitive opsin-2 (G101).